The chain runs to 465 residues: Argininosuccinate lyase (465 aa).

It belongs to the lyase 1 family. Argininosuccinate lyase subfamily.

Its subcellular location is the cytoplasm. The catalysed reaction is 2-(N(omega)-L-arginino)succinate = fumarate + L-arginine. The protein operates within amino-acid biosynthesis; L-arginine biosynthesis; L-arginine from L-ornithine and carbamoyl phosphate: step 3/3. In Deinococcus deserti (strain DSM 17065 / CIP 109153 / LMG 22923 / VCD115), this protein is Argininosuccinate lyase.